We begin with the raw amino-acid sequence, 249 residues long: Electron transfer flavoprotein subunit beta (249 aa).

The protein belongs to the ETF beta-subunit/FixA family. In terms of assembly, heterodimer of an alpha and a beta subunit. The cofactor is FAD. AMP is required as a cofactor.

In terms of biological role, the electron transfer flavoprotein serves as a specific electron acceptor for other dehydrogenases. It transfers the electrons to the main respiratory chain via ETF-ubiquinone oxidoreductase (ETF dehydrogenase). The sequence is that of Electron transfer flavoprotein subunit beta (etfB) from Bradyrhizobium diazoefficiens (strain JCM 10833 / BCRC 13528 / IAM 13628 / NBRC 14792 / USDA 110).